The chain runs to 192 residues: Probable molybdenum cofactor guanylyltransferase (192 aa).

GTP is bound by residues 8-10 (LAG), Lys-20, Asp-69, and Asp-94. Residue Asp-94 coordinates Mg(2+).

It belongs to the MobA family. Requires Mg(2+) as cofactor.

Its subcellular location is the cytoplasm. The catalysed reaction is Mo-molybdopterin + GTP + H(+) = Mo-molybdopterin guanine dinucleotide + diphosphate. Transfers a GMP moiety from GTP to Mo-molybdopterin (Mo-MPT) cofactor (Moco or molybdenum cofactor) to form Mo-molybdopterin guanine dinucleotide (Mo-MGD) cofactor. The chain is Probable molybdenum cofactor guanylyltransferase from Pyrococcus horikoshii (strain ATCC 700860 / DSM 12428 / JCM 9974 / NBRC 100139 / OT-3).